Reading from the N-terminus, the 258-residue chain is Venom plasminogen activator TSV-PA (258 aa).

An N-terminal signal peptide occupies residues 1–18 (MELIRVLANLLILQLSYA). Positions 19–24 (QKSSEL) are excised as a propeptide. The 225-residue stretch at 25 to 249 (VFGGDECNIN…YLDWIKSIIA (225 aa)) folds into the Peptidase S1 domain. Cystine bridges form between cysteine 31-cysteine 163, cysteine 50-cysteine 66, cysteine 98-cysteine 256, cysteine 142-cysteine 210, cysteine 174-cysteine 189, and cysteine 200-cysteine 225. Active-site charge relay system residues include histidine 65 and aspartate 110. Asparagine 185 carries N-linked (GlcNAc...) asparagine glycosylation. The Charge relay system role is filled by serine 204.

Belongs to the peptidase S1 family. Snake venom subfamily. As to quaternary structure, monomer. In terms of tissue distribution, expressed by the venom gland.

Its subcellular location is the secreted. In terms of biological role, snake venom serine protease that activates plasminogen. The polypeptide is Venom plasminogen activator TSV-PA (Trimeresurus stejnegeri (Chinese green tree viper)).